The following is a 34-amino-acid chain: Calcitonin-like peptide 1 (34 aa).

A disulfide bridge connects residues C2 and C7. Residue P34 is modified to Proline amide.

In Odorrana schmackeri (Schmacker's frog), this protein is Calcitonin-like peptide 1.